We begin with the raw amino-acid sequence, 90 residues long: Small ribosomal subunit protein uS15 (90 aa).

This sequence belongs to the universal ribosomal protein uS15 family. As to quaternary structure, part of the 30S ribosomal subunit. Forms a bridge to the 50S subunit in the 70S ribosome, contacting the 23S rRNA.

Its function is as follows. One of the primary rRNA binding proteins, it binds directly to 16S rRNA where it helps nucleate assembly of the platform of the 30S subunit by binding and bridging several RNA helices of the 16S rRNA. In terms of biological role, forms an intersubunit bridge (bridge B4) with the 23S rRNA of the 50S subunit in the ribosome. In Campylobacter jejuni subsp. doylei (strain ATCC BAA-1458 / RM4099 / 269.97), this protein is Small ribosomal subunit protein uS15.